Reading from the N-terminus, the 582-residue chain is tRNA-guanine(15) transglycosylase (582 aa).

Catalysis depends on aspartate 95, which acts as the Nucleophile. Substrate-binding residues include aspartate 130 and glycine 196. Zn(2+)-binding residues include cysteine 279, cysteine 281, and cysteine 284. A PUA domain is found at 507–582; it reads RMRVVVNKEA…RAVKVRKGVE (76 aa).

It belongs to the archaeosine tRNA-ribosyltransferase family. As to quaternary structure, homodimer. Zn(2+) is required as a cofactor.

The catalysed reaction is guanosine(15) in tRNA + 7-cyano-7-deazaguanine = 7-cyano-7-carbaguanosine(15) in tRNA + guanine. Its pathway is tRNA modification; archaeosine-tRNA biosynthesis. Its function is as follows. Exchanges the guanine residue with 7-cyano-7-deazaguanine (preQ0) at position 15 in the dihydrouridine loop (D-loop) of archaeal tRNAs. The sequence is that of tRNA-guanine(15) transglycosylase (tgtA) from Pyrococcus horikoshii (strain ATCC 700860 / DSM 12428 / JCM 9974 / NBRC 100139 / OT-3).